The primary structure comprises 560 residues: Choline/ethanolamine transporter FLVCR1 (560 aa).

The segment at 1–43 (MARPDDEVGPAVAPGHPLGKGYLPVPKGAPDGEARLVPQNGPE) is disordered. Over 1-92 (MARPDDEVGP…EDVPCPACPP (92 aa)) the chain is Cytoplasmic. Residues 93–117 (RTALSPRRFVVLLIFSLYSLVNAFQ) traverse the membrane as a helical segment. Residues 118–135 (WIQYSSISNVFEDFYEVS) are Extracellular-facing. The chain crosses the membrane as a helical span at residues 136–163 (PLHINWLSMVYMVAYVPLIFPATWLLDT). Topologically, residues 164-165 (RG) are cytoplasmic. A helical membrane pass occupies residues 166–185 (LRLTALLGSGLNCLGAWVKC). At 186 to 192 (GSVQRHL) the chain is on the extracellular side. The helical transmembrane segment at 193 to 221 (FWVTMLGQILCSVAQVFILGLPSPVASVW) threads the bilayer. An ethanolamine-binding site is contributed by Q207. Residues 222–226 (FGPKE) are Cytoplasmic-facing. The chain crosses the membrane as a helical span at residues 227–252 (VSTACATAVLGNQLGTAVGFLLPPVL). Residues 253–270 (VPALGTQNSTGLLAHTQN) lie on the Extracellular side of the membrane. An N-linked (GlcNAc...) asparagine glycan is attached at N270. Residues 271 to 300 (NTDLLAHNINTMFYGTAFISTFLFFLTIIA) traverse the membrane as a helical segment. Residues 301 to 336 (FKEKPPLPPSQAQAVLRDSPPEEYSYKSSIWNLCRN) lie on the Cytoplasmic side of the membrane. Residues 337–367 (IPFVLLLVSYGIMTGAFYSISTLLNQIILTY) form a helical membrane-spanning segment. Residues 368–371 (YVGE) lie on the Extracellular side of the membrane. A helical transmembrane segment spans residues 372 to 400 (EVNAGRIGLTLVVAGMVGSILCGLWLDYT). The Cytoplasmic portion of the chain corresponds to 401–402 (KT). A helical membrane pass occupies residues 403–425 (YKQTTLIVYVLSFIGMLIFTFTL). The Extracellular segment spans residues 426 to 428 (NLG). A helical membrane pass occupies residues 429–458 (YIIVVFFTGGILGFFMTGYLPLGFEFAVEI). At 459–466 (TYPESEGM) the chain is on the cytoplasmic side. The chain crosses the membrane as a helical span at residues 467–492 (SSGLLNTAAQILGIFFTLAQGKITTD). Ethanolamine is bound at residue Q476. Choline is bound at residue Q476. Topologically, residues 493-495 (YNS) are extracellular. A helical membrane pass occupies residues 496–518 (PEAGNIFLCAWMFVGIILTALIK). The Cytoplasmic portion of the chain corresponds to 519–560 (SDLRRHNINTGLTNIDVKAVPVDSRVDPKPKVMVSIQSESSL). S542 bears the Phosphoserine mark.

Belongs to the major facilitator superfamily. Feline leukemia virus subgroup C receptor (TC 2.A.1.28.1) family.

The protein resides in the cell membrane. The protein localises to the mitochondrion membrane. The catalysed reaction is choline(out) = choline(in). The enzyme catalyses ethanolamine(in) = ethanolamine(out). It catalyses the reaction heme b(in) = heme b(out). Functionally, uniporter that mediates the transport of extracellular choline and ethanolamine into cells, thereby playing a key role in phospholipid biosynthesis. Choline and ethanolamine are the precursors of phosphatidylcholine and phosphatidylethanolamine, respectively, the two most abundant phospholipids. Transport is not coupled with proton transport and is exclusively driven by the choline (or ethanolamine) gradient across the plasma membrane. Also acts as a heme b transporter that mediates heme efflux from the cytoplasm to the extracellular compartment. In terms of biological role, uniporter that mediates the transport of extracellular choline and ethanolamine into cells. Choline and ethanolamine are the precursors of phosphatidylcholine and phosphatidylethanolamine, respectively, the two most abundant phospholipids. Transport is not coupled with proton transport and is exclusively driven by the choline (or ethanolamine) gradient across the plasma membrane. Also acts as a heme b transporter that mediates heme efflux from the cytoplasm to the extracellular compartment. Heme export depends on the presence of HPX and is required to maintain intracellular free heme balance, protecting cells from heme toxicity. Heme export provides protection from heme or ferrous iron toxicities in liver, brain, sensory neurons and during erythropoiesis, a process in which heme synthesis intensifies. Possibly export coproporphyrin and protoporphyrin IX, which are both intermediate products in the heme biosynthetic pathway. Does not export bilirubin. The molecular mechanism of heme transport, whether electrogenic, electroneutral or coupled to other ions, remains to be elucidated. Heme transporter that promotes heme efflux from the mitochondrion to the cytoplasm. Essential for erythroid differentiation. The polypeptide is Choline/ethanolamine transporter FLVCR1 (Flvcr1) (Mus musculus (Mouse)).